A 438-amino-acid chain; its full sequence is sn-glycerol-3-phosphate-binding periplasmic protein UgpB (438 aa).

Positions 1–23 (MISLRHTALGLALSLAFTGQALA) are cleaved as a signal peptide. 7 residues coordinate sn-glycerol 3-phosphate: tyrosine 65, glutamate 89, serine 144, serine 270, glycine 307, tyrosine 346, and arginine 397.

This sequence belongs to the bacterial solute-binding protein 1 family. In terms of assembly, the complex is composed of two ATP-binding proteins (UgpC), two transmembrane proteins (UgpA and UgpE) and a solute-binding protein (UgpB).

It localises to the periplasm. In terms of biological role, part of the ABC transporter complex UgpBAEC involved in sn-glycerol-3-phosphate (G3P) import. Binds G3P. The protein is sn-glycerol-3-phosphate-binding periplasmic protein UgpB (ugpB) of Salmonella typhi.